A 307-amino-acid polypeptide reads, in one-letter code: Olfactory receptor 5AC1 (307 aa).

The Extracellular portion of the chain corresponds to 1 to 28 (MAEENKILVTHFVLTGLTDHPGLQAPLF). A helical membrane pass occupies residues 29 to 49 (LVFLVIYLITLVGNLGLMALI). Topologically, residues 50 to 56 (WKDPHLH) are cytoplasmic. Residues 57–77 (TPIYLFLGSLAFADACTSSSV) traverse the membrane as a helical segment. Residues 78–99 (TSKMLINFLSKNHMLSMAKCAT) are Extracellular-facing. Residues C97 and C179 are joined by a disulfide bond. A helical membrane pass occupies residues 100–120 (QFYFFGSNATTECFLLVVMAY). Residues 121 to 143 (DRYVAICNPLLYPVVMSNSLCTQ) are Cytoplasmic-facing. Residues 144–164 (FIGISYFIGFLHSAIHVGLLF) form a helical membrane-spanning segment. Residues 165–195 (RLTFCRSNIIHYFYCEILQLFKISCTNPTVN) are Extracellular-facing. The chain crosses the membrane as a helical span at residues 196 to 216 (ILLIFIFSAFIQVFTFMTLIV). The Cytoplasmic segment spans residues 217–239 (SYSYILSAILKKKSEKGRSKAFS). A helical transmembrane segment spans residues 240–260 (TCSAHLLSVSLFYGTLFFMYV). Topologically, residues 261-271 (SSRSGSAADQA) are extracellular. The helical transmembrane segment at 272-292 (KMYSLFYTIIIPLLNPFIYSL) threads the bilayer. The Cytoplasmic portion of the chain corresponds to 293-307 (RNKEVIDALRRIMKK).

The protein belongs to the G-protein coupled receptor 1 family.

It localises to the cell membrane. Its function is as follows. Odorant receptor. This is Olfactory receptor 5AC1 (OR5AC1) from Homo sapiens (Human).